The sequence spans 223 residues: Sugar fermentation stimulation protein homolog (223 aa).

It belongs to the SfsA family.

The protein is Sugar fermentation stimulation protein homolog of Thermosipho melanesiensis (strain DSM 12029 / CIP 104789 / BI429).